Reading from the N-terminus, the 277-residue chain is Bis(5'-nucleosyl)-tetraphosphatase, symmetrical (277 aa).

This sequence belongs to the Ap4A hydrolase family.

It catalyses the reaction P(1),P(4)-bis(5'-adenosyl) tetraphosphate + H2O = 2 ADP + 2 H(+). In terms of biological role, hydrolyzes diadenosine 5',5'''-P1,P4-tetraphosphate to yield ADP. In Bordetella bronchiseptica (strain ATCC BAA-588 / NCTC 13252 / RB50) (Alcaligenes bronchisepticus), this protein is Bis(5'-nucleosyl)-tetraphosphatase, symmetrical.